The primary structure comprises 151 residues: MTIKPSDSVSWFQVLQRGQHYMKTWPADKRLAPVFPENRVTVVTRFGIRFMPPLAIFTLTWQIALGGQLGPAIATALFACGLPLQGLWWLGKRAITPLPPTLLQWFHEVRHKLSEAGQAVAPIEPIPTYQSLADLLKRAFKQLDKTFLDDL.

The next 2 membrane-spanning stretches (helical) occupy residues 46 to 66 (FGIR…IALG) and 69 to 89 (LGPA…GLWW).

This sequence belongs to the UPF0208 family.

It localises to the cell inner membrane. The sequence is that of UPF0208 membrane protein YPTB2595 from Yersinia pseudotuberculosis serotype I (strain IP32953).